We begin with the raw amino-acid sequence, 411 residues long: MRFAWTVLFLGQLQFCPLLRCAPQAPREPPAAPGAWRQTIQWENNGQVFSLLSLGAQYQPQRRRDSSATAPRADGNAAAQPRTPILLLRDNRTASARARTPSPSGVAAGRPRPAARHWFQVGFSPSGAGDGASRRAANRTASPQPPQLSNLRPPSHVDRMVGDDPYNPYKYSDDNPYYNYYDTYERPRSGSRHRPGYGTGYFQYGLPDLVPDPYYIQASTYVQKMSMYNLRCAAEENCLASSAYRADVRDYDHRVLLRFPQRVKNQGTSDFLPSRPRYSWEWHSCHQHYHSMDEFSHYDLLDASTQRRVAEGHKASFCLEDTSCDYGYHRRFACTAHTQGLSPGCYDTYAADIDCQWIDITDVQPGNYILKVSVNPSYLVPESDYSNNVVRCEIRYTGHHAYASGCTISPY.

A signal peptide spans 1 to 21 (MRFAWTVLFLGQLQFCPLLRC). Residues 22-162 (APQAPREPPA…PPSHVDRMVG (141 aa)) constitute a propeptide, removed by BMP1. Positions 60 to 168 (PQRRRDSSAT…RMVGDDPYNP (109 aa)) are disordered. Residues N91 and N138 are each glycosylated (N-linked (GlcNAc...) asparagine). Residue Y181 is modified to Sulfotyrosine. The lysyl-oxidase like stretch occupies residues 207–411 (PDLVPDPYYI…YASGCTISPY (205 aa)). Cystine bridges form between C232/C238, C285/C334, C318/C324, C345/C355, and C392/C406. Positions 286, 288, and 290 each coordinate Cu cation. Positions 314 to 349 (KASFCLEDTSCDYGYHRRFACTAHTQGLSPGCYDTY) form a cross-link, lysine tyrosylquinone (Lys-Tyr). Y349 carries the post-translational modification 2',4',5'-topaquinone.

This sequence belongs to the lysyl oxidase family. As to quaternary structure, interacts with MFAP4. Interacts (via propeptide) with EFEMP2; this interaction is strong and facilitates formation of ternary complexes with ELN during elastic fiber assembly; this interaction limits interaction of EFEMP2 with FBLN5. Cu cation serves as cofactor. The cofactor is lysine tyrosylquinone residue. Post-translationally, the lysine tyrosylquinone cross-link (LTQ) is generated by condensation of the epsilon-amino group of a lysine with a topaquinone produced by oxidation of tyrosine. In terms of processing, proteolytically cleaved by BMP1 which removes the propeptide. Also proteolytically cleaved by ADAMTS2 and ADAMTS14, but not by ADAMTS3, at an additional cleavage site downstream of the BMP1 cleavage site. The propeptide plays a role in directing the deposition of this enzyme to elastic fibers, via interaction with tropoelastin. Cleavage by BMP1 to remove the propeptide does not increase enzymatic activity but increases binding to collagen. Cleavage by ADAMTS2 produces a form with reduced collagen-binding activity. Sulfated at Tyr-181 and also at either Tyr-177 or Tyr-178 which enhances binding to collagen. Aorta and lung.

Its subcellular location is the secreted. The protein resides in the extracellular space. The enzyme catalyses L-lysyl-[protein] + O2 + H2O = (S)-2-amino-6-oxohexanoyl-[protein] + H2O2 + NH4(+). Its function is as follows. Responsible for the post-translational oxidative deamination of peptidyl lysine residues in precursors to fibrous collagen and elastin. Regulator of Ras expression. May play a role in tumor suppression. Plays a role in the aortic wall architecture. The protein is Protein-lysine 6-oxidase of Rattus norvegicus (Rat).